The following is a 538-amino-acid chain: Phosphoenolpyruvate carboxykinase (ATP) (538 aa).

3 residues coordinate substrate: Arg61, Tyr195, and Lys201. Residues Lys201, His220, and 236-244 contribute to the ATP site; that span reads GLSGTGKTT. Mn(2+) is bound by residues Lys201 and His220. Residue Asp257 participates in Mn(2+) binding. Positions 285, 323, and 449 each coordinate ATP. Arg323 contributes to the substrate binding site.

It belongs to the phosphoenolpyruvate carboxykinase (ATP) family. The cofactor is Mn(2+).

It localises to the cytoplasm. It catalyses the reaction oxaloacetate + ATP = phosphoenolpyruvate + ADP + CO2. The protein operates within carbohydrate biosynthesis; gluconeogenesis. Functionally, involved in the gluconeogenesis. Catalyzes the conversion of oxaloacetate (OAA) to phosphoenolpyruvate (PEP) through direct phosphoryl transfer between the nucleoside triphosphate and OAA. This is Phosphoenolpyruvate carboxykinase (ATP) from Nitrobacter hamburgensis (strain DSM 10229 / NCIMB 13809 / X14).